The sequence spans 439 residues: MSTLFLNARLLNPAENLDTVGSIKIGDDGLIEAVATGGESIPAKAEDNVIDLAGKVLAPGLFDMHCHFREPGQEYKETLETGSAAAVAGGFTGVALMPNTRPVIDSPLGVAYIRHHSAGLPIDLEVIGAMTVESRGEALAPYGKYASYSVKAVSDDGTAIQSSQIMRLAIEYAANFDLLLIQHAEDKHLTAGGIMNDGAVSAMLGLKGIPEVAEPIMIARDLQLIAWLKKHKLNGAVAEPRYHVAHISTAESVALVRKAKAAGLKVTCEVTPHHFTLTEHDLSSSIEKGNFIMKPPLASVENRDALIEGLRDGTIDAIATDHAPHAKHEKECPPDQAAFGIIGLETSLGLTITELVDKGVITLSQAIELLSTNPRRIMGLETILFRAGRKANLTIIDPDCEWIVSESDFGSKSRNTPFMGRKLKGRALGIYHNSKLIMR.

His65 and His67 together coordinate Zn(2+). Substrate is bound by residues 67–69 (HFR) and Asn99. Positions 156, 183, 246, and 321 each coordinate Zn(2+). Asp321 is a catalytic residue. Residues His325 and 339-340 (FG) each bind substrate.

Belongs to the metallo-dependent hydrolases superfamily. DHOase family. Class I DHOase subfamily. Requires Zn(2+) as cofactor.

The catalysed reaction is (S)-dihydroorotate + H2O = N-carbamoyl-L-aspartate + H(+). Its pathway is pyrimidine metabolism; UMP biosynthesis via de novo pathway; (S)-dihydroorotate from bicarbonate: step 3/3. In terms of biological role, catalyzes the reversible cyclization of carbamoyl aspartate to dihydroorotate. This is Dihydroorotase from Chlorobaculum tepidum (strain ATCC 49652 / DSM 12025 / NBRC 103806 / TLS) (Chlorobium tepidum).